The primary structure comprises 612 residues: Autophagy-related protein 28 (612 aa).

The tract at residues 44–72 is disordered; sequence NHMEEQSPKFESSFPRRTSEGPVDDVGKS. A coiled-coil region spans residues 214 to 296; it reads YQAKAQDKQA…QRTLKNECFQ (83 aa).

This sequence belongs to the ATG28 family. As to quaternary structure, interacts with ATG35.

It localises to the cytoplasm. The protein resides in the vacuole membrane. Its subcellular location is the cytoplasmic vesicle membrane. Required for the autophagic degradation of peroxisomes called pexophagy, but not essential for general autophagy. Involved in resistance to elevated pH. This Komagataella phaffii (strain GS115 / ATCC 20864) (Yeast) protein is Autophagy-related protein 28 (ATG28).